The sequence spans 308 residues: Palmitoyltransferase ZDHHC7 (308 aa).

Residues 1 to 50 (MQPSGHRLRDIEHHPLLTDNDNYDSASSSSSEADMADRVWFIRDGCGMVC) lie on the Cytoplasmic side of the membrane. Residues 51–71 (AVMTWLLVVYADFVVTFVMLL) form a helical membrane-spanning segment. The Lumenal segment spans residues 72–75 (PSKD). A helical membrane pass occupies residues 76-96 (FWYSVVNGVLFNCLAVLALSS). Residues 97–173 (HLRTMLTDPG…NNCVGEKNQR (77 aa)) are Cytoplasmic-facing. Residues 130–180 (YKCPKCCCIKPERAHHCSICKRCIRKMDHHCPWVNNCVGEKNQRFFVLFTM) form the DHHC domain. The active-site S-palmitoyl cysteine intermediate is cysteine 160. Residues 174 to 194 (FFVLFTMYIALSSIHALILCG) form a helical membrane-spanning segment. The Lumenal portion of the chain corresponds to 195–217 (LQFISCVRGQWTECSDFSPPITV). Residues 218–238 (ILLVFLCLEGLLFFTFTAVMF) traverse the membrane as a helical segment. Over 239–308 (GTQIHSICND…TRKGGPEFSV (70 aa)) the chain is Cytoplasmic.

Belongs to the DHHC palmitoyltransferase family. In terms of assembly, homooligomers. Heterooligomers with ZDHHC3. In terms of processing, autopalmitoylated. Widely expressed. Present in Sertoli cells (at protein level).

It localises to the golgi apparatus membrane. The enzyme catalyses L-cysteinyl-[protein] + hexadecanoyl-CoA = S-hexadecanoyl-L-cysteinyl-[protein] + CoA. It catalyses the reaction L-cysteinyl-[protein] + tetradecanoyl-CoA = S-tetradecanoyl-L-cysteinyl-[protein] + CoA. The catalysed reaction is L-cysteinyl-[protein] + octadecanoyl-CoA = S-octadecanoyl-L-cysteinyl-[protein] + CoA. Its function is as follows. Golgi-localized palmitoyltransferase that catalyzes the addition of palmitate onto various protein substrates and therefore functions in several unrelated biological processes. Has no stringent fatty acid selectivity and in addition to palmitate can also transfer onto target proteins myristate from tetradecanoyl-CoA and stearate from octadecanoyl-CoA. Palmitoylates sex steroid hormone receptors, including ESR1, PGR and AR, thereby regulating their targeting to the plasma membrane and their function in rapid intracellular signaling upon binding of sex hormones. Palmitoylates GNAQ, a heterotrimeric G protein, regulating its dynamic localization at the plasma membrane and is thereby involved in GNAQ-dependent G protein-coupled receptor signaling pathways. Also functions in ligand-induced cell death by regulating the FAS signaling pathway through the palmitoylation and stabilization of the receptor at the plasma membrane. In epithelial cells, palmitoylates SCRIB and regulates its localization to the plasma membrane, regulating indirectly cell polarity and differentiation. Also palmitoylates JAM3 and promotes its expression at tight junctions and regulates its function in cell migration. Palmitoylates the glucose transporter GLUT4/SLC2A4 and controls the insulin-dependent translocation of GLUT4 to the plasma membrane. In brain, could also palmitoylate SNAP25 and DLG4/PSD95. Could also palmitoylate DNAJC5 and regulate its localization to the Golgi membrane. Could also palmitoylate NCDN. May play a role in follicle stimulation hormone (FSH) activation of testicular Sertoli cells. Activates pyroptosis by catalyzing palmitoylation of gasdermin-D (GSDMD). This is Palmitoyltransferase ZDHHC7 from Rattus norvegicus (Rat).